A 409-amino-acid polypeptide reads, in one-letter code: Nucleoprotein (409 aa).

Disordered regions lie at residues 1-32 (MASG…SSGN), 46-69 (SPPL…QQHG), 120-193 (GADT…SGAE), and 238-259 (VDQV…DKMN). Residues 15–31 (PVIKLGGPKPPKVGSSG) show a composition bias toward low complexity. The tract at residues 29 to 160 (SSGNASWFQA…GNFRWDFIPL (132 aa)) is RNA-binding. One can recognise a CoV N NTD domain in the interval 31-156 (GNASWFQAIK…GGPDGNFRWD (126 aa)). Over residues 162–179 (RGRSGKSTAASSAASSRA) the composition is skewed to low complexity. Basic and acidic residues-rich tracts occupy residues 180-192 (PSRE…RSGA) and 247-259 (KGKE…DKMN). S190 carries the phosphoserine; by host modification. Positions 215-331 (TKAKADEMAH…QCVDGVGTRP (117 aa)) constitute a CoV N CTD domain. A dimerization region spans residues 226 to 333 (RYCKRTIPPG…VDGVGTRPKD (108 aa)). A disulfide bridge connects residues C320 and C323. The interval 327 to 409 (VGTRPKDDEP…GDSALGENEL (83 aa)) is disordered. Residues 341–354 (RSSSRPATRTSSPA) are compositionally biased toward low complexity. Basic residues predominate over residues 358 to 367 (PRPKKEKKTK). Over residues 368 to 384 (KQDDEVDKALTSDEERN) the composition is skewed to basic and acidic residues. Position 378 is a phosphothreonine; by host (T378). The residue at position 379 (S379) is a Phosphoserine; by host.

It belongs to the gammacoronavirus nucleocapsid protein family. In terms of assembly, homooligomer. Both monomeric and oligomeric forms interact with RNA. Interacts with protein M. Interacts with NSP3; this interaction serves to tether the genome to the newly translated replicase-transcriptase complex at a very early stage of infection. In terms of processing, ADP-ribosylated. The ADP-ribosylation is retained in the virion during infection. Post-translationally, phosphorylated on serine and threonine residues.

It localises to the virion. It is found in the host endoplasmic reticulum-Golgi intermediate compartment. The protein localises to the host Golgi apparatus. Packages the positive strand viral genome RNA into a helical ribonucleocapsid (RNP) and plays a fundamental role during virion assembly through its interactions with the viral genome and membrane protein M. Plays an important role in enhancing the efficiency of subgenomic viral RNA transcription as well as viral replication. This is Nucleoprotein from Gallus gallus (Chicken).